The primary structure comprises 229 residues: Ras-related protein Rab-33B (229 aa).

8 residues coordinate GTP: N43, V44, G45, K46, T47, C48, T62, and T65. Residue T47 participates in Mg(2+) binding. Residues 56–68 (GRFPDRTEATIGV) carry the Switch 1 motif. Mg(2+) contacts are provided by T65 and D88. Positions 89–108 (TAGQERFRKSMVQHYYRNVH) match the Switch 2 motif. GTP-binding residues include G91, N148, K149, D151, A179, and K180. 2 S-geranylgeranyl cysteine lipidation sites follow: C227 and C229. C229 carries the cysteine methyl ester modification.

This sequence belongs to the small GTPase superfamily. Rab family. As to quaternary structure, interacts (GTP- and GDP-bound forms) with ATG16L1; the complex consists of a tetramer where two RAB33B molecules bind independently one molecule of the ATG16L1 homodimer; the interaction promotes ATG12-ATG5-ATG16L1 complex recruitment to phagophores. Interacts with ATG16L2; however interaction is approximately hundred times lower than for ATG16L1. Interacts with RIC1 (via C-terminus domain); the interaction is direct with a preference for RAB33B-GTP. Interacts with RGP1. It depends on Mg(2+) as a cofactor. Post-translationally, prenylated.

The protein resides in the golgi apparatus membrane. It is found in the golgi apparatus. The protein localises to the cis-Golgi network. Its subcellular location is the preautophagosomal structure membrane. It catalyses the reaction GTP + H2O = GDP + phosphate + H(+). Its activity is regulated as follows. Regulated by guanine nucleotide exchange factors (GEFs) which promote the exchange of bound GDP for free GTP. Regulated by GTPase activating proteins (GAPs) such as SGSM2 which increase the GTP hydrolysis activity. Inhibited by GDP dissociation inhibitors (GDIs). In terms of biological role, the small GTPases Rab are key regulators of intracellular membrane trafficking, from the formation of transport vesicles to their fusion with membranes. Rabs cycle between an inactive GDP-bound form and an active GTP-bound form that is able to recruit to membranes different sets of downstream effectors directly responsible for vesicle formation, movement, tethering and fusion. RAB33B acts, in coordination with RAB6A, to regulate intra-Golgi retrograde trafficking. Participates in autophagosome formation by recruiting the ATG12-ATG5-ATG16L1 complex to phagophores, probably in a nucleotide-independent manner. The sequence is that of Ras-related protein Rab-33B from Homo sapiens (Human).